Consider the following 180-residue polypeptide: Translation initiation factor IF-3 (180 aa).

This sequence belongs to the IF-3 family. As to quaternary structure, monomer.

The protein localises to the cytoplasm. Functionally, IF-3 binds to the 30S ribosomal subunit and shifts the equilibrium between 70S ribosomes and their 50S and 30S subunits in favor of the free subunits, thus enhancing the availability of 30S subunits on which protein synthesis initiation begins. The protein is Translation initiation factor IF-3 of Escherichia coli (strain K12 / MC4100 / BW2952).